The sequence spans 503 residues: NAD(P)H-quinone oxidoreductase chain 4, chloroplastic (503 aa).

13 helical membrane passes run 4–24 (FPWLTIIVVFPISAGSSIFFL), 37–57 (ICICLLELLLTTYAFCYHFQL), 87–107 (IGPTLLTGFITTLATLAAWPV), 134–154 (LLLFFIMWELELIPVYLLLSM), 167–187 (FILYTAGGSIFLLMGVPGMGL), 208–228 (ALEIIFYFGFFIAYAVKSPII), 242–262 (HYSTCMLLAGILLKMGAYGLV), 272–292 (AHSIFSPWLMIVGTIQIIYAA), 305–325 (IAYSSVSHMGFTIIGIASITD), 330–350 (GAILQIISHGFIGAALFFLAG), 386–406 (LALPGMSGFFAELVVFFGIIT), 416–436 (ILITFVMAIGMILTPIYSLSM), and 462–482 (LFVSICIFLPVIGIGIYPDFV).

It belongs to the complex I subunit 4 family.

Its subcellular location is the plastid. The protein resides in the chloroplast thylakoid membrane. The catalysed reaction is a plastoquinone + NADH + (n+1) H(+)(in) = a plastoquinol + NAD(+) + n H(+)(out). It catalyses the reaction a plastoquinone + NADPH + (n+1) H(+)(in) = a plastoquinol + NADP(+) + n H(+)(out). The sequence is that of NAD(P)H-quinone oxidoreductase chain 4, chloroplastic from Drimys granadensis.